Reading from the N-terminus, the 514-residue chain is Multifunctional alkaline phosphatase superfamily protein PehA (514 aa).

Asp12, Cys57, Asp324, and His325 together coordinate Mn(2+). Cys57 functions as the Nucleophile in the catalytic mechanism. Cys57 carries the post-translational modification 3-oxoalanine (Cys).

The protein belongs to the alkaline phosphatase superfamily. Homotetramer. Requires Mn(2+) as cofactor. In terms of processing, the conversion to 3-oxoalanine (also known as C-formylglycine, FGly), of a serine or cysteine residue in prokaryotes and of a cysteine residue in eukaryotes, is critical for catalytic activity. Phosphate triester hydrolytic activity is retained with unmodified cysteine acting as a nucleophile.

Anions including Cl(-) and CH3COO(-), and SO4(2-) salts stimulate activity 20-40% at 100 mM. Its function is as follows. Hydrolytic enzyme with a broad substrate specificity acting on phosphate diesters and phosphonate monoesters. Hydrolyzes phosphate mono- and triesters, sulfate monoesters and sulfonate monoesters. Hydrolyzes glyphosate monoesters. Does not hydrolyze DNA or cGMP. Hydrolyzes glyceryl glyphosate, but this substrate has a much lower affinity than the glyphosate monoesters. This chain is Multifunctional alkaline phosphatase superfamily protein PehA, found in Trinickia caryophylli (Paraburkholderia caryophylli).